A 581-amino-acid chain; its full sequence is Pentatricopeptide repeat-containing protein At1g34160 (581 aa).

9 PPR repeats span residues 67–101 (LTND…SSSS), 108–142 (DALT…GLSA), 143–173 (DSLL…MPVR), 174–208 (DVAS…GIRR), 209–239 (SEVT…YSND), 240–270 (NVIV…FTGK), 272–306 (SVVT…GIKP), 307–341 (DDVS…GVER), and 342–372 (NMKH…MSMI). The interval 377–452 (LWQSLLGASE…IPGLSYIEAK (76 aa)) is type E motif. The interval 453 to 483 (GTIHEFYNSDKSHEQWREIYEKIDEIRFKIR) is type E(+) motif. The tract at residues 484–581 (EDGYVAQTGL…DGSCSCRDFW (98 aa)) is type DYW motif.

It belongs to the PPR family. PCMP-H subfamily.

The protein is Pentatricopeptide repeat-containing protein At1g34160 (PCMP-H68) of Arabidopsis thaliana (Mouse-ear cress).